The primary structure comprises 474 residues: F420-non-reducing hydrogenase vhc subunit A (474 aa).

Residues Cys-61, Cys-64, Cys-445, and Cys-448 each contribute to the Ni(2+) site.

It belongs to the [NiFe]/[NiFeSe] hydrogenase large subunit family. In terms of assembly, the F420-non-reducing hydrogenase vhc is composed of three subunits; VhcA, VhcD and VhcG. Requires Ni(2+) as cofactor.

In Methanococcus voltae, this protein is F420-non-reducing hydrogenase vhc subunit A (vhcA).